We begin with the raw amino-acid sequence, 127 residues long: UPF0102 protein ERGA_CDS_00540 (127 aa).

The protein belongs to the UPF0102 family.

The sequence is that of UPF0102 protein ERGA_CDS_00540 from Ehrlichia ruminantium (strain Gardel).